The chain runs to 164 residues: Putative protein ZNF321 (164 aa).

The protein is Putative protein ZNF321 (ZNF321P) of Homo sapiens (Human).